A 144-amino-acid chain; its full sequence is Universal stress protein F (144 aa).

It belongs to the universal stress protein A family. In terms of assembly, homodimer.

This chain is Universal stress protein F (uspF), found in Salmonella typhi.